Consider the following 517-residue polypeptide: Crotonobetaine/carnitine--CoA ligase (517 aa).

This sequence belongs to the ATP-dependent AMP-binding enzyme family.

The enzyme catalyses 4-(trimethylamino)butanoate + ATP + CoA = 4-(trimethylamino)butanoyl-CoA + AMP + diphosphate. The catalysed reaction is crotonobetaine + ATP + CoA = crotonobetainyl-CoA + AMP + diphosphate. It catalyses the reaction (R)-carnitine + ATP + CoA = (R)-carnitinyl-CoA + AMP + diphosphate. The protein operates within amine and polyamine metabolism; carnitine metabolism. Functionally, catalyzes the transfer of CoA to carnitine, generating the initial carnitinyl-CoA needed for the CaiB reaction cycle. Also has activity toward crotonobetaine and gamma-butyrobetaine. The protein is Crotonobetaine/carnitine--CoA ligase of Salmonella paratyphi A (strain ATCC 9150 / SARB42).